We begin with the raw amino-acid sequence, 217 residues long: Dephospho-CoA kinase (217 aa).

The 200-residue stretch at 4–203 (IVALTGGISS…SHLSRIYNKN (200 aa)) folds into the DPCK domain. ATP is bound at residue 12–17 (SSGKTT).

The protein belongs to the CoaE family.

Its subcellular location is the cytoplasm. The catalysed reaction is 3'-dephospho-CoA + ATP = ADP + CoA + H(+). The protein operates within cofactor biosynthesis; coenzyme A biosynthesis; CoA from (R)-pantothenate: step 5/5. In terms of biological role, catalyzes the phosphorylation of the 3'-hydroxyl group of dephosphocoenzyme A to form coenzyme A. The polypeptide is Dephospho-CoA kinase (Buchnera aphidicola subsp. Acyrthosiphon pisum (strain APS) (Acyrthosiphon pisum symbiotic bacterium)).